The sequence spans 214 residues: 3-isopropylmalate dehydratase small subunit (214 aa).

It belongs to the LeuD family. LeuD type 1 subfamily. As to quaternary structure, heterodimer of LeuC and LeuD.

It catalyses the reaction (2R,3S)-3-isopropylmalate = (2S)-2-isopropylmalate. The protein operates within amino-acid biosynthesis; L-leucine biosynthesis; L-leucine from 3-methyl-2-oxobutanoate: step 2/4. Functionally, catalyzes the isomerization between 2-isopropylmalate and 3-isopropylmalate, via the formation of 2-isopropylmaleate. In Nitrosococcus oceani (strain ATCC 19707 / BCRC 17464 / JCM 30415 / NCIMB 11848 / C-107), this protein is 3-isopropylmalate dehydratase small subunit.